The chain runs to 45 residues: Large ribosomal subunit protein bL34 (45 aa).

A disordered region spans residues 1–45 (MTKRTLGGTVRKQKRTSGFRARMRSHTGQNVIRARRKKGRHRLTV). 2 stretches are compositionally biased toward basic residues: residues 11 to 25 (RKQK…RMRS) and 33 to 45 (RARR…RLTV).

It belongs to the bacterial ribosomal protein bL34 family.

The protein is Large ribosomal subunit protein bL34 of Picosynechococcus sp. (strain ATCC 27264 / PCC 7002 / PR-6) (Agmenellum quadruplicatum).